The chain runs to 89 residues: uncharacterized protein (89 aa).

This is an uncharacterized protein from Saccharomyces cerevisiae (strain ATCC 204508 / S288c) (Baker's yeast).